Here is a 404-residue protein sequence, read N- to C-terminus: Keratin, type I microfibrillar, 47.6 kDa (404 aa).

The tract at residues 1-56 is head; the sequence is MSFNFCLPNLSFRSSCSSRPCVPSSCCGTTLPGACNIPASVGSCNWFCEGSFNGNE. The 312-residue stretch at 56-367 folds into the IF rod domain; it reads EKETMQFLND…GLLDSEDCKL (312 aa). Residues 57–91 form a coil 1A region; sequence KETMQFLNDRLASYLEKVRQLERENAELERRILER. Positions 92-102 are linker 1; it reads SQQQEPLVCPN. The interval 103–203 is coil 1B; the sequence is YQSYFRTIEE…HEQEVNTLRS (101 aa). The interval 204-219 is linker 12; sequence QLGDRLNVEVDAAPTV. The interval 220-363 is coil 2; the sequence is DLNHVLNETR…NTYRGLLDSE (144 aa). Positions 364-404 are tail; the sequence is DCKLPCNPCATTNTCGKPIGPCISNPCVSRTRCGPCNTFVH.

It belongs to the intermediate filament family.

Functionally, wool microfibrillar keratin. This Ovis aries (Sheep) protein is Keratin, type I microfibrillar, 47.6 kDa.